Reading from the N-terminus, the 80-residue chain is 17 kDa surface antigen (80 aa).

Residues 47–58 show a composition bias toward polar residues; that stretch reads ALETTPSGTSIE. The tract at residues 47-80 is disordered; that stretch reads ALETTPSGTSIEWRNPDNGNYGYVTPSKTYKNST.

Belongs to the rickettsiale 17 kDa surface antigen family.

Its subcellular location is the cell outer membrane. This Rickettsia canadensis protein is 17 kDa surface antigen (omp).